The sequence spans 244 residues: 5-oxoprolinase subunit A (244 aa).

This sequence belongs to the LamB/PxpA family. In terms of assembly, forms a complex composed of PxpA, PxpB and PxpC.

It carries out the reaction 5-oxo-L-proline + ATP + 2 H2O = L-glutamate + ADP + phosphate + H(+). Catalyzes the cleavage of 5-oxoproline to form L-glutamate coupled to the hydrolysis of ATP to ADP and inorganic phosphate. In Shigella dysenteriae serotype 1 (strain Sd197), this protein is 5-oxoprolinase subunit A.